A 177-amino-acid chain; its full sequence is Translation initiation factor IF-3 (177 aa).

It belongs to the IF-3 family. In terms of assembly, monomer.

Its subcellular location is the cytoplasm. IF-3 binds to the 30S ribosomal subunit and shifts the equilibrium between 70S ribosomes and their 50S and 30S subunits in favor of the free subunits, thus enhancing the availability of 30S subunits on which protein synthesis initiation begins. The protein is Translation initiation factor IF-3 of Nitratiruptor sp. (strain SB155-2).